The following is a 1224-amino-acid chain: ATP-dependent helicase/nuclease subunit A (1224 aa).

The UvrD-like helicase ATP-binding domain occupies 15–480 (VIWTDAQWQS…IDLSQNFRSR (466 aa)). 36-43 (AAAGSGKT) serves as a coordination point for ATP. Positions 497–791 (EQVGEISYDD…RMMTIHSSKG (295 aa)) constitute a UvrD-like helicase C-terminal domain.

Belongs to the helicase family. AddA subfamily. As to quaternary structure, heterodimer of AddA and AddB/RexB. Mg(2+) serves as cofactor.

The enzyme catalyses Couples ATP hydrolysis with the unwinding of duplex DNA by translocating in the 3'-5' direction.. It catalyses the reaction ATP + H2O = ADP + phosphate + H(+). The heterodimer acts as both an ATP-dependent DNA helicase and an ATP-dependent, dual-direction single-stranded exonuclease. Recognizes the chi site generating a DNA molecule suitable for the initiation of homologous recombination. The AddA nuclease domain is required for chi fragment generation; this subunit has the helicase and 3' -&gt; 5' nuclease activities. The sequence is that of ATP-dependent helicase/nuclease subunit A from Staphylococcus epidermidis (strain ATCC 12228 / FDA PCI 1200).